A 713-amino-acid chain; its full sequence is MIARKRKSNGSETTSGKIPKDDVSSESCLDQPADESVHEVVTFEPSTLPSVHYDPDTTEPISCSLKSLDELLSWKRNEASIFNVSSVPLASRYPPLESCPRRTLVSHDMMGGYLEDRFIQGAEVETPYAFYHWEYIDIFNYFSHQMVTIPPAVWTNAAHRHGVLSIGTFITEWTDGAKTCEAFLADEESYRAAADKLVQISHCNGFDGWLINIENELSETAVNNTGPFLRYLTDQMHERVPGSVVIWYDSVLKDGKLLWQNELNDNNRMFFDACDGFFTNYNWTEQSLEGMKSYAAAQGRFADIYVGVDVFARGKVIGGKYETNKALELIRKYDLSTAIFAPDWVYECHEKADFRQNQDKFWSLLSDFLYIHRPSSNLPFVSSFCQGFGKSLYWRGKVETERSWFNLHAQEIQPLYLSESFGNGGWLRTRGCSEDAWIGGSSLMLEGMIPSGLSDVCARIFSLHVPLAARTFVSFVFKPPVGVKVSLELKTIDGPLCTFDGTEEIASRSVFPEALAESNQLVEQFAQNCGQWASDGWATRCFLLKMIGCSLREVCIRVSRDGGDEDINFNCRIGEIMLLDADNLQAPLQSVEGICVNDVVWQTGVLKGDGHTLKVLLNATLRWQYPTRQVRHFRIHWRHLRGPDPRIPSGPLTLIGRSYSALYRVVELEVPAAPGLIELVVEPVSKEGFSVPEAQWGRQTLSYSQSPSGNPSH.

The segment at 1–36 (MIARKRKSNGSETTSGKIPKDDVSSESCLDQPADES) is disordered. The BRCT domain maps to 270–362 (FFDACDGFFT…DFRQNQDKFW (93 aa)).

It belongs to the glycosyl hydrolase 85 family.

It localises to the cytoplasm. The protein localises to the cytosol. It carries out the reaction an N(4)-(oligosaccharide-(1-&gt;3)-[oligosaccharide-(1-&gt;6)]-beta-D-Man-(1-&gt;4)-beta-D-GlcNAc-(1-&gt;4)-alpha-D-GlcNAc)-L-asparaginyl-[protein] + H2O = an oligosaccharide-(1-&gt;3)-[oligosaccharide-(1-&gt;6)]-beta-D-Man-(1-&gt;4)-D-GlcNAc + N(4)-(N-acetyl-beta-D-glucosaminyl)-L-asparaginyl-[protein]. In terms of biological role, endoglycosidase that releases N-glycans from glycoproteins by cleaving the beta-1,4-glycosidic bond in the N,N'-diacetylchitobiose core. Involved in the processing of free oligosaccharides in the cytosol. The protein is Cytosolic endo-beta-N-acetylglucosaminidase (engase) of Danio rerio (Zebrafish).